Reading from the N-terminus, the 379-residue chain is Guanine nucleotide-binding protein G(s) subunit alpha (379 aa).

Positions 1-29 are disordered; sequence MGCFGSAGAKGDAEENKKRKEANKNINKQ. The N-palmitoyl glycine moiety is linked to residue glycine 2. A lipid anchor (S-palmitoyl cysteine) is attached at cysteine 3. In terms of domain architecture, G-alpha spans 39 to 379; sequence ATHRLLLLGA…RMHLRQYELL (341 aa). Positions 42-55 are G1 motif; that stretch reads RLLLLGAGESGKST. GTP-binding positions include 47–54, 183–189, 208–212, 277–280, and alanine 351; these read GAGESGKS, LRCRVLT, DVGGQ, and NKQD. Mg(2+) is bound by residues serine 54 and threonine 189. The G2 motif stretch occupies residues 181–189; that stretch reads DILRCRVLT. The interval 204-213 is G3 motif; sequence FHMFDVGGQR. A G4 motif region spans residues 273–280; the sequence is ILFLNKQD. A G5 motif region spans residues 349–354; the sequence is TCAVDT.

It belongs to the G-alpha family. G(s) subfamily. G proteins are composed of 3 units; alpha, beta and gamma. The alpha chain contains the guanine nucleotide binding site.

Its function is as follows. Guanine nucleotide-binding proteins (G proteins) are involved as modulators or transducers in various transmembrane signaling systems. The G(s) protein is involved in hormonal regulation of adenylate cyclase: it activates the cyclase in response to beta-adrenergic stimuli. The sequence is that of Guanine nucleotide-binding protein G(s) subunit alpha from Homarus americanus (American lobster).